A 223-amino-acid polypeptide reads, in one-letter code: Imidazoleglycerol-phosphate dehydratase (223 aa).

This sequence belongs to the imidazoleglycerol-phosphate dehydratase family.

It carries out the reaction D-erythro-1-(imidazol-4-yl)glycerol 3-phosphate = 3-(imidazol-4-yl)-2-oxopropyl phosphate + H2O. It functions in the pathway amino-acid biosynthesis; L-histidine biosynthesis; L-histidine from 5-phospho-alpha-D-ribose 1-diphosphate: step 6/9. In Torulaspora delbrueckii (Yeast), this protein is Imidazoleglycerol-phosphate dehydratase (HIS3).